The chain runs to 845 residues: Tyrosine-protein phosphatase corkscrew (845 aa).

SH2 domains are found at residues 6–101 and 111–205; these read WFHP…KQPL and WFHG…RQPF. Residues 227 to 645 form the Tyrosine-protein phosphatase domain; that stretch reads FWEEFESLQQ…KFVYYAVQHY (419 aa). Residues 289–444 form a PTPase insert (Cys/Ser-rich) region; the sequence is IRLPTDGDLY…REREREMFKT (156 aa). Positions 362-402 are disordered; sequence SKHKRSESSASSSPSSGSGSGPGSSGTSGVSSVNGPGTPTN. Composition is skewed to low complexity over residues 369 to 378 and 388 to 400; these read SSASSSPSSG and TSGVSSVNGPGTP. Ser-419 is subject to Phosphoserine. Substrate is bound by residues Asp-545, 583-589, and Gln-630; that span reads CSAGIGR. The active-site Phosphocysteine intermediate is Cys-583. The tract at residues 793-824 is disordered; that stretch reads DSLKQQQQREEQAPAGAGKMQQPAPPLRPRPG.

This sequence belongs to the protein-tyrosine phosphatase family. Non-receptor class subfamily. Interacts with drpr isoform A. As to expression, expressed uniformly throughout all tissues during embryogenesis.

It localises to the cytoplasm. It carries out the reaction O-phospho-L-tyrosyl-[protein] + H2O = L-tyrosyl-[protein] + phosphate. Required in all receptor tyrosine kinase signaling pathways. Functions downstream of the receptor tyrosine kinase torso, acting in concert with D-Raf via tailless. Also functions downstream of Egfr (epidermal growth factor receptor) and btl (fibroblast growth factor receptor). The SH2 domain suggests that csw effects its role by mediating heteromeric protein interactions. Maternally required for normal determination of cell fates at the termini of the embryo. Required for cell fate specification of the ventral ectoderm, in the developing embryonic CNS and for embryonic tracheal cell migration. Functions during imaginal development for proper formation of adult structures such as eyes, aristae, L5 wing vein and the tarsal claw. Dephosphorylates drpr isoform A which is required for the inhibition by drpr isoform A of glial cell engulfment of axonal debris produced following axonal injury. The sequence is that of Tyrosine-protein phosphatase corkscrew (csw) from Drosophila melanogaster (Fruit fly).